The primary structure comprises 187 residues: Elongation factor P (187 aa).

This sequence belongs to the elongation factor P family.

It is found in the cytoplasm. It participates in protein biosynthesis; polypeptide chain elongation. Involved in peptide bond synthesis. Stimulates efficient translation and peptide-bond synthesis on native or reconstituted 70S ribosomes in vitro. Probably functions indirectly by altering the affinity of the ribosome for aminoacyl-tRNA, thus increasing their reactivity as acceptors for peptidyl transferase. The protein is Elongation factor P of Rhizorhabdus wittichii (strain DSM 6014 / CCUG 31198 / JCM 15750 / NBRC 105917 / EY 4224 / RW1) (Sphingomonas wittichii).